The primary structure comprises 288 residues: Thymidylate synthase (288 aa).

Residues R21 and 150 to 151 (RR) each bind dUMP. C170 acts as the Nucleophile in catalysis. DUMP is bound by residues 191–194 (RSGD), N202, and 232–234 (HIY). D194 is a (6R)-5,10-methylene-5,6,7,8-tetrahydrofolate binding site. (6R)-5,10-methylene-5,6,7,8-tetrahydrofolate is bound at residue A287.

Belongs to the thymidylate synthase family. Bacterial-type ThyA subfamily. Homodimer.

It localises to the cytoplasm. The enzyme catalyses dUMP + (6R)-5,10-methylene-5,6,7,8-tetrahydrofolate = 7,8-dihydrofolate + dTMP. It functions in the pathway pyrimidine metabolism; dTTP biosynthesis. Its function is as follows. Catalyzes the reductive methylation of 2'-deoxyuridine-5'-monophosphate (dUMP) to 2'-deoxythymidine-5'-monophosphate (dTMP) while utilizing 5,10-methylenetetrahydrofolate (mTHF) as the methyl donor and reductant in the reaction, yielding dihydrofolate (DHF) as a by-product. This enzymatic reaction provides an intracellular de novo source of dTMP, an essential precursor for DNA biosynthesis. This Mesoplasma florum (strain ATCC 33453 / NBRC 100688 / NCTC 11704 / L1) (Acholeplasma florum) protein is Thymidylate synthase.